A 580-amino-acid polypeptide reads, in one-letter code: Phosphatase and actin regulator 1 (580 aa).

Phosphoserine occurs at positions 67 and 78. A Phosphothreonine modification is found at T104. Residues 108–129 carry the Nuclear localization signal motif; sequence RRRSKFANLGRIFKPWKWRKKK. The RPEL 1 repeat unit spans residues 138-163; the sequence is AALERKISMRQSREELIKRGVLKEIY. Residues 331–351 form a disordered region; sequence EQRVPCSTSYHSSGLHSSDGV. Residues 337–348 show a composition bias toward low complexity; that stretch reads STSYHSSGLHSS. RPEL repeat units follow at residues 422–447, 460–485, and 498–523; these read DSLAIKLSNRPSKRELEEKNILPRQT, TKLTRRLSQRPTAEELEQRNILKPRN, and RRLTRKLSQRPTVEELRERKILIRFS. The segment at 462–494 is disordered; it reads LTRRLSQRPTAEELEQRNILKPRNEQEEQEEKR. S467 carries the post-translational modification Phosphoserine. Residues 471-494 show a composition bias toward basic and acidic residues; that stretch reads TAEELEQRNILKPRNEQEEQEEKR. S505 bears the Phosphoserine mark.

Belongs to the phosphatase and actin regulator family. As to quaternary structure, interacts (via RPEL repeats) with ACTA1 and PPP1CA; ACTA1 and PPP1CA compete for the same binding site. As to expression, selectively expressed in brain. High levels are found in the olfactory tubercle, nucleus accumbens core and shell, caudate-putamen, cerebral cortex, hippocampus and piriform cortex. Moderate to high levels in the olfactory bulb, arcuate and ventromedial hypothalamus, subthalamic nucleus, amygdala, lateral septum, habenula and thalamus. Low expression, if any, in substantia nigra pars compacta/pars reticula and globus pallidus (at protein level).

The protein localises to the cytoplasm. It localises to the synapse. The protein resides in the nucleus. Binds actin monomers (G actin) and plays a role in multiple processes including the regulation of actin cytoskeleton dynamics, actin stress fibers formation, cell motility and survival, formation of tubules by endothelial cells, and regulation of PPP1CA activity. Involved in the regulation of cortical neuron migration and dendrite arborization. This is Phosphatase and actin regulator 1 (Phactr1) from Rattus norvegicus (Rat).